The sequence spans 262 residues: MAPIVETAKETNSDSSLYLDLMIKVLAGTVYEDPAHRENFSHRDSTYREEVRNEGRDWPANAHTMIGIKRLENIRQCVEDVIGNNVPGDLVETGVWRGGACILMRGILRAHDVRDRTVWVADSFQGIPDVGEDGYAGDRKMALHRRNSVLAVSEEEVRRNFRNYDLLDEQVRFLPGWFKDTLPTAPIDTLAVLRMDGDLYESTWDTLTNLYPKVSVGGYVIVDDYMMCPPCKDAVDEYRAKFDIADELITIDRDGVYWQRTR.

S-adenosyl-L-methionine is bound at residue 64 to 65 (TM). The Proton acceptor role is filled by E72. S-adenosyl-L-methionine-binding positions include 92–96 (ETGVW), 122–126 (DSFQG), F178, 196–197 (DG), and S202. Mg(2+) is bound at residue D196. D223 and D224 together coordinate Mg(2+).

This sequence belongs to the methyltransferase TylF/MycF family. In terms of assembly, homodimer. The cofactor is Mg(2+).

The enzyme catalyses desmethyldescarbamoylnovobiocin + S-adenosyl-L-methionine = descarbamoylnovobiocin + S-adenosyl-L-homocysteine + H(+). The protein operates within antibiotic biosynthesis; novobiocin biosynthesis. S-adenosyl-L-methionine-dependent O-methyltransferase that methylates at 4-OH of the noviose moiety, the penultimate step in the novobiocin biosynthesis pathway. Novobiocin is an aminocoumarin family antibiotic that targets bacterial DNA gyrases. In Streptomyces niveus (Streptomyces spheroides), this protein is Demethyldecarbamoylnovobiocin O-methyltransferase (novP).